A 527-amino-acid chain; its full sequence is Peptide chain release factor 3 (527 aa).

The tr-type G domain maps to 9–277; the sequence is AKRRTFAIIS…CIVDWAPQPL (269 aa). Residues 18-25, 86-90, and 140-143 each bind GTP; these read SHPDAGKT, DTPGH, and NKLD.

Belongs to the TRAFAC class translation factor GTPase superfamily. Classic translation factor GTPase family. PrfC subfamily.

The protein resides in the cytoplasm. Increases the formation of ribosomal termination complexes and stimulates activities of RF-1 and RF-2. It binds guanine nucleotides and has strong preference for UGA stop codons. It may interact directly with the ribosome. The stimulation of RF-1 and RF-2 is significantly reduced by GTP and GDP, but not by GMP. The polypeptide is Peptide chain release factor 3 (Pseudomonas aeruginosa (strain LESB58)).